The sequence spans 626 residues: Transketolase-like protein 2 (626 aa).

H37 serves as a coordination point for substrate. Thiamine diphosphate contacts are provided by residues S40, H77, and 123–125 (GSL). D155 serves as a coordination point for Mg(2+). Residues G156 and N185 each contribute to the thiamine diphosphate site. 2 residues coordinate Mg(2+): N185 and L187. Residues K247 and H261 each contribute to the thiamine diphosphate site. 2 residues coordinate substrate: H261 and S348. 2 residues coordinate thiamine diphosphate: E369 and F395. Catalysis depends on E369, which acts as the Proton donor. H419 and D427 together coordinate substrate. Residue Q431 participates in thiamine diphosphate binding. Residue R477 coordinates substrate.

Belongs to the transketolase family. Homodimer. The cofactor is Mg(2+). Ca(2+) serves as cofactor. Mn(2+) is required as a cofactor. Requires Co(2+) as cofactor. It depends on thiamine diphosphate as a cofactor.

It catalyses the reaction D-sedoheptulose 7-phosphate + D-glyceraldehyde 3-phosphate = aldehydo-D-ribose 5-phosphate + D-xylulose 5-phosphate. Functionally, plays an essential role in total transketolase activity and cell proliferation in cancer cells; after transfection with anti-TKTL1 siRNA, total transketolase activity dramatically decreases and proliferation was significantly inhibited in cancer cells. Plays a pivotal role in carcinogenesis. This is Transketolase-like protein 2 (TKTL2) from Bos taurus (Bovine).